Here is a 296-residue protein sequence, read N- to C-terminus: uncharacterized protein (296 aa).

The next 10 helical transmembrane spans lie at 8 to 28, 34 to 54, 63 to 83, 89 to 109, 121 to 141, 147 to 167, 183 to 203, 208 to 228, 238 to 258, and 261 to 281; these read LFVLIAAFFWGTTGTVQALAP, LAFGAFRLLIGGSAMLLAVWI, WAWPLVFLAAVCMACYQPLFF, TGIAVGTVIAIGSAPIIAGTL, SWWIATVLALAGCWLLFSDSS, VAGVLMALGAGASFAGYTLIS, VFMISAILLTPLLWQLDISWI, GLGTSLYIGLIATCAAYFLFA, AAVTLSLAEPLTASLLGVFFI, and MLSPSSWLGIALMMLGLLVIS. EamA domains follow at residues 15–138 and 158–282; these read FFWG…LLFS and ASFA…VISA.

The protein belongs to the EamA transporter family.

Its subcellular location is the cell membrane. This is an uncharacterized protein from Bacillus subtilis (strain 168).